The primary structure comprises 1631 residues: ALK tyrosine kinase receptor (1631 aa).

An N-terminal signal peptide occupies residues 1 to 18; sequence MGSVGLLGLLLLRLSVTA. The Extracellular portion of the chain corresponds to 19–1053; that stretch reads SGSGAGTGSG…PHLPLSLVLS (1035 aa). The disordered stretch occupies residues 20 to 53; sequence GSGAGTGSGTGSGTGTGTGQLVGSPATGPALQPR. Gly residues predominate over residues 21–39; that stretch reads SGAGTGSGTGSGTGTGTGQ. Residues 60-82 form a heparin-binding region region; that stretch reads RLQRKSLAVDFVVPSLFRVYARD. N-linked (GlcNAc...) asparagine glycosylation is found at Asn185, Asn260, Asn301, Asn340, Asn427, Asn440, Asn461, Asn579, Asn587, and Asn643. Residues 280-443 form the MAM 1 domain; that stretch reads LECSFDFPCE…DFFALKNCSE (164 aa). In terms of domain architecture, MAM 2 spans 494 to 652; the sequence is FYCNFENGFC…NISISLDCYL (159 aa). Cys703 and Cys716 form a disulfide bridge. Asn724 is a glycosylation site (N-linked (GlcNAc...) asparagine). A disulfide bridge links Cys798 with Cys809. N-linked (GlcNAc...) asparagine glycosylation is found at Asn823, Asn878, Asn879, and Asn901. Residues Cys921 and Cys943 are joined by a disulfide bond. An N-linked (GlcNAc...) asparagine glycan is attached at Asn1001. 3 cysteine pairs are disulfide-bonded: Cys1002–Cys1010, Cys1005–Cys1021, and Cys1023–Cys1036. The EGF-like stretch occupies residues 1002 to 1040; sequence CSHCEGDECHMDPESHKVICFCDHGTVLAEDGVSCIVSP. A helical transmembrane segment spans residues 1054 to 1074; that stretch reads VVTSALVAALVLAFSGIMIVY. The Cytoplasmic segment spans residues 1075-1631; it reads RRKHQELQAM…DALLKTPPGP (557 aa). In terms of domain architecture, Protein kinase spans 1131-1407; that stretch reads ITLIRGLGHG…IEYCTQDPDV (277 aa). ATP-binding positions include 1137 to 1145 and Lys1165; that span reads LGHGAFGEV. The active-site Proton acceptor is Asp1264. 3 disordered regions span residues 1423 to 1493, 1526 to 1554, and 1609 to 1631; these read EEKV…GHVN, WFTE…REGS, and FEGT…PPGP.

In terms of assembly, homodimer; homodimerizes following heparin- and ligand-binding. Interacts with CBL, IRS1, PIK3R1 and PLCG1. Interacts with FRS2 and SHC1. Interacts with PTN and MDK. In terms of processing, phosphorylated at tyrosine residues by autocatalysis, which activates kinase activity. In cells not stimulated by a ligand, receptor protein tyrosine phosphatase beta and zeta complex (PTPRB/PTPRZ1) dephosphorylates ALK at the sites in ALK that are undergoing autophosphorylation through autoactivation.

It is found in the cell membrane. The catalysed reaction is L-tyrosyl-[protein] + ATP = O-phospho-L-tyrosyl-[protein] + ADP + H(+). With respect to regulation, activated upon ALKAL2 ligand-binding. ALKAL2-driven activation is coupled with heparin-binding. Following ligand-binding, homodimerizes and autophosphorylates, activating its kinase activity. Inactivated through dephosphorylation by receptor protein tyrosine phosphatase beta and zeta complex (PTPRB/PTPRZ1) when there is no stimulation by a ligand. In terms of biological role, neuronal receptor tyrosine kinase that is essentially and transiently expressed in specific regions of the central and peripheral nervous systems and plays an important role in the genesis and differentiation of the nervous system. Also acts as a key thinness protein involved in the resistance to weight gain: in hypothalamic neurons, controls energy expenditure acting as a negative regulator of white adipose tissue lipolysis and sympathetic tone to fine-tune energy homeostasis. Following activation by ALKAL2 ligand at the cell surface, transduces an extracellular signal into an intracellular response. In contrast, ALKAL1 is not a potent physiological ligand for ALK. Ligand-binding to the extracellular domain induces tyrosine kinase activation, leading to activation of the mitogen-activated protein kinase (MAPK) pathway. Phosphorylates almost exclusively at the first tyrosine of the Y-x-x-x-Y-Y motif. Induces tyrosine phosphorylation of CBL, FRS2, IRS1 and SHC1, as well as of the MAP kinases MAPK1/ERK2 and MAPK3/ERK1. ALK activation may also be regulated by pleiotrophin (PTN) and midkine (MDK). PTN-binding induces MAPK pathway activation, which is important for the anti-apoptotic signaling of PTN and regulation of cell proliferation. MDK-binding induces phosphorylation of the ALK target insulin receptor substrate (IRS1), activates mitogen-activated protein kinases (MAPKs) and PI3-kinase, resulting also in cell proliferation induction. Drives NF-kappa-B activation, probably through IRS1 and the activation of the AKT serine/threonine kinase. Recruitment of IRS1 to activated ALK and the activation of NF-kappa-B are essential for the autocrine growth and survival signaling of MDK. The sequence is that of ALK tyrosine kinase receptor from Canis lupus familiaris (Dog).